The chain runs to 486 residues: Fructose dehydrogenase cytochrome subunit (486 aa).

Positions 1–25 (MRYFRPLSATAMTTVLLLAGTNVRA) are cleaved as a signal peptide. Cytochrome c domains follow at residues 38–142 (PSIS…MTEV), 186–294 (DDWN…RSVP), and 330–423 (TKTT…LSHF). Heme c contacts are provided by cysteine 52, cysteine 55, histidine 56, cysteine 201, cysteine 204, histidine 205, cysteine 343, cysteine 346, and histidine 347. Residues 458 to 478 (LLGTGGILGAILVVAGLWWLI) traverse the membrane as a helical segment.

In terms of assembly, heterotrimer composed of FdhL, FdhS and FdhC. In terms of processing, binds 3 heme c groups covalently per subunit.

The protein localises to the cell membrane. In terms of biological role, cytochrome subunit of fructose dehydrogenase, an enzyme that catalyzes the oxidation of D-fructose to produce 5-keto-D-fructose. In the complex, mediates both the electron transfer to ubiquinone and the anchoring of the complex to the membrane. This chain is Fructose dehydrogenase cytochrome subunit (fdhC), found in Gluconobacter japonicus.